The chain runs to 266 residues: Undecaprenyl-diphosphatase (266 aa).

A run of 8 helical transmembrane segments spans residues 1 to 21 (MDTFQVIILALIQGLTEFLPI), 39 to 59 (QGLSFDVAVNTGSLLAVVMYF), 87 to 107 (WWIILATIPAVIVGFTAKDFI), 115 to 135 (AVIATTTIVFGLLLWWADRMF), 144 to 164 (VGWKKALVIGVAQAMALIPGT), 183 to 203 (AAARFSFLMSVPVSLGAAILV), 218 to 238 (ALSLGIIVSFVAAYTCIHLFL), and 246 to 266 (MTPFVIYRLALGAILCAFMFA).

It belongs to the UppP family.

The protein resides in the cell inner membrane. It catalyses the reaction di-trans,octa-cis-undecaprenyl diphosphate + H2O = di-trans,octa-cis-undecaprenyl phosphate + phosphate + H(+). Its function is as follows. Catalyzes the dephosphorylation of undecaprenyl diphosphate (UPP). Confers resistance to bacitracin. This chain is Undecaprenyl-diphosphatase, found in Shewanella sediminis (strain HAW-EB3).